Consider the following 603-residue polypeptide: Multicopper oxidase MCE (603 aa).

Positions 1–21 (MNTFICSALICLSWLPGFIQA) are cleaved as a signal peptide. Residues 30 to 144 (ITYAKGAPDG…YGALWIRPKE (115 aa)) enclose the Plastocyanin-like 1 domain. A glycan (N-linked (GlcNAc...) asparagine) is linked at Asn75. Cu cation-binding residues include His79, His81, His123, and His125. N-linked (GlcNAc...) asparagine glycans are attached at residues Asn155, Asn180, Asn235, Asn256, Asn272, Asn275, Asn388, Asn394, Asn413, and Asn455. The region spanning 173 to 353 (LIVSDWSNFT…TPGDYTIRLP (181 aa)) is the Plastocyanin-like 2 domain. One can recognise a Plastocyanin-like 3 domain in the interval 450 to 581 (LLYNPNSTAA…GGMAGVIMDG (132 aa)). His495 contributes to the Cu cation binding site. Asn512 and Asn595 each carry an N-linked (GlcNAc...) asparagine glycan.

This sequence belongs to the multicopper oxidase family.

It carries out the reaction 4 monapinone A + O2 = 2 dinapinone A + 2 H2O. The enzyme catalyses 4 monapinone E + O2 = 2 dinapinone E + 2 H2O. The protein operates within secondary metabolite biosynthesis. Functionally, multicopper oxidase; part of the gene cluster that mediates the biosynthesis of dinapinones DPA1 (or (M)-DPA) and DPA2 (or (P)-DPA), biaryl dihydronaphthopyranones that act in concert as inhibitors of triacylglycerol accumulation in mammalian cells. The first step in the pathway corresponds to the biosynthesis of dihydroxy-decanoyl-CoA by the fungal type I fatty acid synthase (formed by ORF4 and ORF5). The cluster-specific polyketide synthase (ORF7) then accepts and extends dihydroxy-decanoyl-CoA with 6 malonyl-CoA moieties and cyclizes the molecule to produce a putative polyhydroxynaphthopyranone intermediate, which is further methylated by the cluster-specific methyltransferase (ORF1) at 7-OH to produce monapinone A (MPA). MCE catalyzes the regioselective biaryl coupling of monapinone A (MPA) at the 8,8'-positions to afford dimeric atropisomers DPA1 and DPA2 in a ratio of approximately 1:2.5. Monapinone E (MPE) also appears to be a substrate for MCE and provides the atropisomers dinapinones DPE1 (or (M)-DPE) and DPE2 (or (P)-DPE). In Talaromyces pinophilus (Penicillium pinophilum), this protein is Multicopper oxidase MCE.